The chain runs to 93 residues: U12-lycotoxin-Ls1d (93 aa).

The N-terminal stretch at 1–18 (MKFAVILLFSLVVLAVAS) is a signal peptide. Positions 19–38 (ESVEEVRREIDIEDLPEQQR) are excised as a propeptide.

It belongs to the neurotoxin 31 family. Contains 5 disulfide bonds. As to expression, expressed by the venom gland.

It is found in the secreted. The polypeptide is U12-lycotoxin-Ls1d (Lycosa singoriensis (Wolf spider)).